Consider the following 476-residue polypeptide: MAQCVRRLVLAAPLAAVVALLLCTSSAPVARAAGTSDFTGAQQKNTLTVLQAFARAIPALGDTWTGSDFCSWEHIICYSSGVGVWMHNVDYTGTLPEMPASVDYKDVMILALDFGAMGQGLSGTLPPSWSSMKHLIVLDLEGTKVSGTLPPEWSEMTSAEALQLENCGLSGSLPTSWSSMPKLRIVSLSGNHFCGCVPDSWREKDRLDVTIEEWHMGEDCKLANACRPTAAPGTTTTNPPTTTGTPAASSTPSPGSGCEVDGCEVCEGDSAARCARCREGYSLTDEKTCLGEPRWRRGGGVERTAGCRCCVGGCAVERGAGGVRVRRAPLLCGAPGACPRPRHGVVAALSPPPADGETDSHTRTRTRRRASRVLSAVVAPARMHGHAEACMRVRVPALVCLSVWPAVGTRRRSNVRAAAVCRLGQRRCGARPSPCASVCVSWPRERRTECACPALFDGARLRCCALVVCAGAAPAG.

The first 32 residues, Met1–Ala32, serve as a signal peptide directing secretion. Tandem repeats lie at residues Val107 to Ser130, Ser131 to Ser154, Glu155 to Ser178, and Ser179 to Arg202. The tract at residues Val107–Arg202 is 4 X 24 AA tandem repeats. Disordered regions lie at residues Ala231–Gly255 and Ala348–Ala370. A lipid anchor (GPI-anchor amidated cysteine) is attached at Cys452. Positions Pro453–Gly476 are cleaved as a propeptide — removed in mature form.

Its subcellular location is the cell membrane. The sequence is that of Surface membrane glycoprotein GP46/M-2 from Leishmania amazonensis.